The primary structure comprises 92 residues: uncharacterized protein (92 aa).

This is an uncharacterized protein from Sulfolobus spindle-shape virus 1 (SSV1).